The primary structure comprises 343 residues: Probable 3',5'-cyclic-nucleotide phosphodiesterase (343 aa).

Residues 1–36 form the signal peptide; the sequence is MKYLSIKSASDKIKSGLLKTGVILSFSLFSSLSTAA.

Belongs to the cyclic nucleotide phosphodiesterase class-II family.

It localises to the periplasm. The enzyme catalyses a nucleoside 3',5'-cyclic phosphate + H2O = a nucleoside 5'-phosphate + H(+). The sequence is that of Probable 3',5'-cyclic-nucleotide phosphodiesterase (cpdP) from Yersinia pestis.